The primary structure comprises 279 residues: Thymidylate synthase (279 aa).

R37 lines the dUMP pocket. H67 is a (6R)-5,10-methylene-5,6,7,8-tetrahydrofolate binding site. 142–143 contributes to the dUMP binding site; sequence RR. C162 functions as the Nucleophile in the catalytic mechanism. DUMP is bound by residues 182–185, N193, and 223–225; these read RSAD and HLY. Residue D185 coordinates (6R)-5,10-methylene-5,6,7,8-tetrahydrofolate. S278 provides a ligand contact to (6R)-5,10-methylene-5,6,7,8-tetrahydrofolate.

Belongs to the thymidylate synthase family. Bacterial-type ThyA subfamily. Homodimer.

Its subcellular location is the cytoplasm. It catalyses the reaction dUMP + (6R)-5,10-methylene-5,6,7,8-tetrahydrofolate = 7,8-dihydrofolate + dTMP. It functions in the pathway pyrimidine metabolism; dTTP biosynthesis. Its function is as follows. Catalyzes the reductive methylation of 2'-deoxyuridine-5'-monophosphate (dUMP) to 2'-deoxythymidine-5'-monophosphate (dTMP) while utilizing 5,10-methylenetetrahydrofolate (mTHF) as the methyl donor and reductant in the reaction, yielding dihydrofolate (DHF) as a by-product. This enzymatic reaction provides an intracellular de novo source of dTMP, an essential precursor for DNA biosynthesis. The protein is Thymidylate synthase of Caulobacter vibrioides (strain ATCC 19089 / CIP 103742 / CB 15) (Caulobacter crescentus).